Here is a 207-residue protein sequence, read N- to C-terminus: Low-molecular weight cobalt-containing nitrile hydratase subunit alpha (207 aa).

The Co(3+) site is built by Cys-109, Cys-112, Ser-113, and Cys-114.

It belongs to the nitrile hydratase subunit alpha family. In terms of assembly, heterodimer of an alpha and a beta chain. Co(3+) is required as a cofactor.

It carries out the reaction an aliphatic primary amide = an aliphatic nitrile + H2O. Its function is as follows. NHase catalyzes the hydration of various nitrile compounds to the corresponding amides. In Rhodococcus rhodochrous, this protein is Low-molecular weight cobalt-containing nitrile hydratase subunit alpha.